An 88-amino-acid chain; its full sequence is ATP synthase subunit c (88 aa).

2 helical membrane passes run 10-30 and 68-88; these read ILAASAIGAGLAMIAGLGPGI and GIYSLVIALILLFANPLIRLL.

Belongs to the ATPase C chain family. F-type ATPases have 2 components, F(1) - the catalytic core - and F(0) - the membrane proton channel. F(1) has five subunits: alpha(3), beta(3), gamma(1), delta(1), epsilon(1). F(0) has three main subunits: a(1), b(2) and c(10-14). The alpha and beta chains form an alternating ring which encloses part of the gamma chain. F(1) is attached to F(0) by a central stalk formed by the gamma and epsilon chains, while a peripheral stalk is formed by the delta and b chains.

It localises to the cell membrane. F(1)F(0) ATP synthase produces ATP from ADP in the presence of a proton or sodium gradient. F-type ATPases consist of two structural domains, F(1) containing the extramembraneous catalytic core and F(0) containing the membrane proton channel, linked together by a central stalk and a peripheral stalk. During catalysis, ATP synthesis in the catalytic domain of F(1) is coupled via a rotary mechanism of the central stalk subunits to proton translocation. In terms of biological role, key component of the F(0) channel; it plays a direct role in translocation across the membrane. A homomeric c-ring of between 10-14 subunits forms the central stalk rotor element with the F(1) delta and epsilon subunits. The polypeptide is ATP synthase subunit c (Alkaliphilus oremlandii (strain OhILAs) (Clostridium oremlandii (strain OhILAs))).